The primary structure comprises 235 residues: MSVHIGAKQGEIADKILLPGDPLRAKYIAETFLEEPKLYNEVRGMYGYTGTYKGERVSVQGTGMGVPSISIYVNELIQSYDVKKLIRVGTCGAIQKDVNVRDVILAQGATTDSQMNRLIFNGIDYAPIADFELLKNAYDAGVDKGLHLRVGNVFTSDTFYRDNAQQVNELLAKYQVLAIEMESTALYTLAAKYGRQALSVLTVSDHIITGEETTAEERQTTFNDMMEIALDTIIK.

H4 provides a ligand contact to a purine D-ribonucleoside. Residues G20, R24, R43, and 87 to 90 (RVGT) each bind phosphate. A purine D-ribonucleoside-binding positions include 180-182 (EME) and 204-205 (SD). The Proton donor role is filled by D205.

This sequence belongs to the PNP/UDP phosphorylase family. As to quaternary structure, homohexamer; trimer of homodimers.

It carries out the reaction a purine D-ribonucleoside + phosphate = a purine nucleobase + alpha-D-ribose 1-phosphate. The catalysed reaction is a purine 2'-deoxy-D-ribonucleoside + phosphate = a purine nucleobase + 2-deoxy-alpha-D-ribose 1-phosphate. Catalyzes the reversible phosphorolytic breakdown of the N-glycosidic bond in the beta-(deoxy)ribonucleoside molecules, with the formation of the corresponding free purine bases and pentose-1-phosphate. This chain is Purine nucleoside phosphorylase DeoD-type, found in Oceanobacillus iheyensis (strain DSM 14371 / CIP 107618 / JCM 11309 / KCTC 3954 / HTE831).